Here is a 346-residue protein sequence, read N- to C-terminus: Cysteinyl leukotriene receptor 2 (346 aa).

Over 1-42 (MERKFMSLQPSISVSEMEPNGTFSNNNSRNCTIENFKREFFP) the chain is Extracellular. Residues N20, N26, and N30 are each glycosylated (N-linked (GlcNAc...) asparagine). Residues 43 to 63 (IVYLIIFFWGVLGNGLSIYVF) form a helical membrane-spanning segment. At 64–72 (LQPYKKSTS) the chain is on the cytoplasmic side. Residues 73-93 (VNVFMLNLAISDLLFISTLPF) form a helical membrane-spanning segment. The Extracellular segment spans residues 94-123 (RADYYLRGSNWIFGDLACRIMSYSLYVNMY). Cysteines 111 and 187 form a disulfide. The helical transmembrane segment at 124 to 144 (SSIYFLTVLSVVRFLAMVHPF) threads the bilayer. The Cytoplasmic segment spans residues 145-153 (RLLHVTSIR). The chain crosses the membrane as a helical span at residues 154–174 (SAWILCGIIWILIMASSIMLL). Topologically, residues 175–204 (DSGSEQNGSVTSCLELNLYKIAKLQTMNYI) are extracellular. N181 is a glycosylation site (N-linked (GlcNAc...) asparagine). The helical transmembrane segment at 205-225 (ALVVGCLLPFFTLSICYLLII) threads the bilayer. The Cytoplasmic segment spans residues 226-245 (RVLLKVEVPESGLRVSHRKA). The chain crosses the membrane as a helical span at residues 246–266 (LTTIIITLIIFFLCFLPYHTL). Residues 267-286 (RTVHLTTWKVGLCKDRLHKA) lie on the Extracellular side of the membrane. The helical transmembrane segment at 287–307 (LVITLALAAANACFNPLLYYF) threads the bilayer. The Cytoplasmic portion of the chain corresponds to 308 to 346 (AGENFKDRLKSALRKGHPQKAKTKCVFPVSVWLRKETRV).

Belongs to the G-protein coupled receptor 1 family. As to expression, widely expressed, with highest levels in the heart, placenta, spleen, peripheral blood leukocytes and adrenal gland. In lung, expressed in the interstitial macrophages, and slightly in smooth muscle cells.

The protein resides in the cell membrane. In terms of biological role, receptor for cysteinyl leukotrienes. The response is mediated via a G-protein that activates a phosphatidylinositol-calcium second messenger system. Stimulation by BAY u9773, a partial agonist, induces specific contractions of pulmonary veins and might also have an indirect role in the relaxation of the pulmonary vascular endothelium. The rank order of affinities for the leukotrienes is LTC4 = LTD4 &gt;&gt; LTE4. In Homo sapiens (Human), this protein is Cysteinyl leukotriene receptor 2 (CYSLTR2).